A 353-amino-acid polypeptide reads, in one-letter code: S-adenosylmethionine:tRNA ribosyltransferase-isomerase (353 aa).

Belongs to the QueA family. Monomer.

It localises to the cytoplasm. The enzyme catalyses 7-aminomethyl-7-carbaguanosine(34) in tRNA + S-adenosyl-L-methionine = epoxyqueuosine(34) in tRNA + adenine + L-methionine + 2 H(+). Its pathway is tRNA modification; tRNA-queuosine biosynthesis. Functionally, transfers and isomerizes the ribose moiety from AdoMet to the 7-aminomethyl group of 7-deazaguanine (preQ1-tRNA) to give epoxyqueuosine (oQ-tRNA). This chain is S-adenosylmethionine:tRNA ribosyltransferase-isomerase, found in Rickettsia bellii (strain OSU 85-389).